We begin with the raw amino-acid sequence, 80 residues long: Large ribosomal subunit protein bL31B (80 aa).

It belongs to the bacterial ribosomal protein bL31 family. Type B subfamily. Part of the 50S ribosomal subunit.

The polypeptide is Large ribosomal subunit protein bL31B (Streptococcus thermophilus (strain CNRZ 1066)).